Here is a 290-residue protein sequence, read N- to C-terminus: Dehydrodolichyl diphosphate synthase CPT3 (290 aa).

Residue Asp42 is part of the active site.

It belongs to the UPP synthase family. It depends on Mg(2+) as a cofactor. In terms of tissue distribution, expressed in leaf trichomes and stem trichomes. Expressed at low levels in young leaves, stems and old leaves.

Its subcellular location is the cytoplasm. It is found in the cytosol. It catalyses the reaction n isopentenyl diphosphate + (2E,6E)-farnesyl diphosphate = a di-trans,poly-cis-polyprenyl diphosphate + n diphosphate. Catalyzes cis-prenyl chain elongation to produce the polyprenyl backbone of dolichol, a glycosyl carrier-lipid required for the biosynthesis of several classes of glycoprotein. The polypeptide is Dehydrodolichyl diphosphate synthase CPT3 (Solanum lycopersicum (Tomato)).